The primary structure comprises 113 residues: Large ribosomal subunit protein uL24 (113 aa).

It belongs to the universal ribosomal protein uL24 family. Part of the 50S ribosomal subunit.

Functionally, one of two assembly initiator proteins, it binds directly to the 5'-end of the 23S rRNA, where it nucleates assembly of the 50S subunit. In terms of biological role, one of the proteins that surrounds the polypeptide exit tunnel on the outside of the subunit. This is Large ribosomal subunit protein uL24 from Rickettsia prowazekii (strain Madrid E).